A 165-amino-acid polypeptide reads, in one-letter code: Myosin regulatory light chain 2A, cardiac muscle isoform (165 aa).

A2 is modified (n,N,N-trimethylalanine). EF-hand domains follow at residues 24–59 (AQIQ…LGRL), 94–128 (DPEE…QEGR), and 129–164 (FSQE…GEEK). 4 residues coordinate Ca(2+): D37, N39, D41, and D48.

Myosin is a hexamer of 2 heavy chains and 4 light chains. Post-translationally, the N-terminus is blocked. N,N,N-trimethylalanine, found in other myosin light chains would not have been detected in the N-terminal tryptic peptide in PubMed:7319048 because it would remain trimethylated and ninhydrin negative after hydrolysis.

The sequence is that of Myosin regulatory light chain 2A, cardiac muscle isoform from Gallus gallus (Chicken).